We begin with the raw amino-acid sequence, 305 residues long: Probable aspartoacylase (305 aa).

His-13 and Glu-16 together coordinate Zn(2+). Substrate-binding positions include Arg-55 and 62 to 63; that span reads NR. His-105 contributes to the Zn(2+) binding site. Substrate is bound by residues Glu-163 and Tyr-273.

It belongs to the AspA/AstE family. Aspartoacylase subfamily. Zn(2+) serves as cofactor.

It catalyses the reaction an N-acyl-L-aspartate + H2O = a carboxylate + L-aspartate. This chain is Probable aspartoacylase, found in Prochlorococcus marinus (strain NATL2A).